The primary structure comprises 654 residues: Pentatricopeptide repeat-containing protein At3g16610 (654 aa).

PPR repeat units follow at residues 1-32 (MFLS…SLTL), 34-64 (SSTV…IPHP), 67-101 (NPIA…GVRP), 102-136 (TKYT…DFAT), 137-171 (DMYV…DMVA), 172-203 (WNAM…GLSP), 204-238 (NLST…GFSN), 239-269 (DLVV…DFKK), 270-304 (NEVT…DNVA), 307-341 (TPVA…GFIL), 342-372 (DLTV…IGLK), 373-407 (DVIS…GIRP), 408-442 (DITT…GYAV), 443-473 (NTSI…MHKR), 474-508 (DIVS…GVNP), 509-543 (DEVT…DFNV), and 546-576 (RIDH…MPFE). The segment at 581 to 654 (VLGTLLSACW…KTPGYSWVDV (74 aa)) is type E motif; degenerate.

Belongs to the PPR family. PCMP-E subfamily.

The polypeptide is Pentatricopeptide repeat-containing protein At3g16610 (PCMP-E91) (Arabidopsis thaliana (Mouse-ear cress)).